The primary structure comprises 273 residues: Putative phosphoenolpyruvate synthase regulatory protein (273 aa).

153–160 is a binding site for ADP; it reads GVSRSGKT.

Belongs to the pyruvate, phosphate/water dikinase regulatory protein family. PSRP subfamily.

The catalysed reaction is [pyruvate, water dikinase] + ADP = [pyruvate, water dikinase]-phosphate + AMP + H(+). It catalyses the reaction [pyruvate, water dikinase]-phosphate + phosphate + H(+) = [pyruvate, water dikinase] + diphosphate. Its function is as follows. Bifunctional serine/threonine kinase and phosphorylase involved in the regulation of the phosphoenolpyruvate synthase (PEPS) by catalyzing its phosphorylation/dephosphorylation. The protein is Putative phosphoenolpyruvate synthase regulatory protein of Verminephrobacter eiseniae (strain EF01-2).